A 241-amino-acid chain; its full sequence is MISVRRGFSQLWYWGKRGVIGIIALWMAGILIFAFLPVPFSMVMIERQLGAWLTGDFAYVAHSDWVPMDEISPYMVLAVMAAEDQKFPDHWGFDVGAIESALSHNQRNQKRIRGASTLSQQTAKNVFLWDGRSWVRKGLEVGLTAGIELIWTKRRILTVYLNIAEFGNGIFGVEAAARHFFNKPASKLSASEAALLAAVLPNPLRFKVNAPSGYVISRQQWILRQMHQLGGKTFLQENTLD.

A helical membrane pass occupies residues 18-38; it reads GVIGIIALWMAGILIFAFLPV.

It belongs to the glycosyltransferase 51 family.

It is found in the cell inner membrane. It carries out the reaction [GlcNAc-(1-&gt;4)-Mur2Ac(oyl-L-Ala-gamma-D-Glu-L-Lys-D-Ala-D-Ala)](n)-di-trans,octa-cis-undecaprenyl diphosphate + beta-D-GlcNAc-(1-&gt;4)-Mur2Ac(oyl-L-Ala-gamma-D-Glu-L-Lys-D-Ala-D-Ala)-di-trans,octa-cis-undecaprenyl diphosphate = [GlcNAc-(1-&gt;4)-Mur2Ac(oyl-L-Ala-gamma-D-Glu-L-Lys-D-Ala-D-Ala)](n+1)-di-trans,octa-cis-undecaprenyl diphosphate + di-trans,octa-cis-undecaprenyl diphosphate + H(+). It participates in cell wall biogenesis; peptidoglycan biosynthesis. Functionally, peptidoglycan polymerase that catalyzes glycan chain elongation from lipid-linked precursors. This is Biosynthetic peptidoglycan transglycosylase from Yersinia pseudotuberculosis serotype O:1b (strain IP 31758).